The primary structure comprises 1368 residues: DNA-directed RNA polymerase subunit beta (1368 aa).

Belongs to the RNA polymerase beta chain family. In terms of assembly, the RNAP catalytic core consists of 2 alpha, 1 beta, 1 beta' and 1 omega subunit. When a sigma factor is associated with the core the holoenzyme is formed, which can initiate transcription.

The enzyme catalyses RNA(n) + a ribonucleoside 5'-triphosphate = RNA(n+1) + diphosphate. Its function is as follows. DNA-dependent RNA polymerase catalyzes the transcription of DNA into RNA using the four ribonucleoside triphosphates as substrates. The chain is DNA-directed RNA polymerase subunit beta from Legionella pneumophila (strain Lens).